A 450-amino-acid chain; its full sequence is Adenosylhomocysteinase (450 aa).

Residues Thr59, Asp135, and Glu160 each contribute to the substrate site. 161-163 (TTT) is a binding site for NAD(+). Lys190 and Asp194 together coordinate substrate. NAD(+) is bound by residues Asn195, 224–229 (GFGDVG), Glu247, 303–305 (IGH), and Asn350.

The protein belongs to the adenosylhomocysteinase family. The cofactor is NAD(+).

The protein localises to the cytoplasm. The catalysed reaction is S-adenosyl-L-homocysteine + H2O = L-homocysteine + adenosine. It functions in the pathway amino-acid biosynthesis; L-homocysteine biosynthesis; L-homocysteine from S-adenosyl-L-homocysteine: step 1/1. Functionally, adenosylhomocysteine is a competitive inhibitor of S-adenosyl-L-methionine-dependent methyl transferase reactions; therefore adenosylhomocysteinase may play a key role in the control of methylations via regulation of the intracellular concentration of adenosylhomocysteine. The sequence is that of Adenosylhomocysteinase (SAH1) from Candida albicans (strain SC5314 / ATCC MYA-2876) (Yeast).